A 68-amino-acid polypeptide reads, in one-letter code: UPF0435 protein SA1696 (68 aa).

It belongs to the UPF0435 family.

The protein is UPF0435 protein SA1696 of Staphylococcus aureus (strain N315).